The chain runs to 233 residues: MPARRQWFGDRRVLKRIVLAVLALVILPYALIFFYVLPFIHPVSTLMLRDLVLLRGYDRRWVSLDEIAPVLVQSVMMSEDGQYCFHGGVDWAEMRMLVEDTLKGQATRGGSTIPMQTAKNLFLWNSRSFVRKAMELPLAVSTDFVLSKRRLMEIYLNIAEWGPGIYGIEAAAQHHFKVPASKLTRRQASLLAVSLPNPIDRNAGKPGRGLRRLAGVIERRAQGSGDYIKCIYE.

The helical transmembrane segment at 17 to 37 threads the bilayer; that stretch reads IVLAVLALVILPYALIFFYVL.

The protein belongs to the glycosyltransferase 51 family.

It localises to the cell inner membrane. The catalysed reaction is [GlcNAc-(1-&gt;4)-Mur2Ac(oyl-L-Ala-gamma-D-Glu-L-Lys-D-Ala-D-Ala)](n)-di-trans,octa-cis-undecaprenyl diphosphate + beta-D-GlcNAc-(1-&gt;4)-Mur2Ac(oyl-L-Ala-gamma-D-Glu-L-Lys-D-Ala-D-Ala)-di-trans,octa-cis-undecaprenyl diphosphate = [GlcNAc-(1-&gt;4)-Mur2Ac(oyl-L-Ala-gamma-D-Glu-L-Lys-D-Ala-D-Ala)](n+1)-di-trans,octa-cis-undecaprenyl diphosphate + di-trans,octa-cis-undecaprenyl diphosphate + H(+). It participates in cell wall biogenesis; peptidoglycan biosynthesis. Its function is as follows. Peptidoglycan polymerase that catalyzes glycan chain elongation from lipid-linked precursors. The chain is Biosynthetic peptidoglycan transglycosylase from Rhizobium leguminosarum bv. trifolii (strain WSM2304).